The following is a 570-amino-acid chain: Urease subunit alpha (570 aa).

In terms of domain architecture, Urease spans 131–570 (GGMDSHIHFI…LPMAQRYFLF (440 aa)). Residues His-136, His-138, and Lys-219 each contribute to the Ni(2+) site. Lys-219 carries the post-translational modification N6-carboxylysine. A substrate-binding site is contributed by His-221. Residues His-248 and His-274 each contribute to the Ni(2+) site. The active-site Proton donor is His-322. A Ni(2+)-binding site is contributed by Asp-362.

The protein belongs to the metallo-dependent hydrolases superfamily. Urease alpha subunit family. In terms of assembly, heterotrimer of UreA (gamma), UreB (beta) and UreC (alpha) subunits. Three heterotrimers associate to form the active enzyme. The cofactor is Ni cation. In terms of processing, carboxylation allows a single lysine to coordinate two nickel ions.

Its subcellular location is the cytoplasm. It catalyses the reaction urea + 2 H2O + H(+) = hydrogencarbonate + 2 NH4(+). It functions in the pathway nitrogen metabolism; urea degradation; CO(2) and NH(3) from urea (urease route): step 1/1. The polypeptide is Urease subunit alpha (Sinorhizobium fredii (strain NBRC 101917 / NGR234)).